The chain runs to 390 residues: Probable L-tyrosine/L-aspartate decarboxylase (390 aa).

At Lys-239 the chain carries N6-(pyridoxal phosphate)lysine.

This sequence belongs to the group II decarboxylase family. MfnA subfamily. Pyridoxal 5'-phosphate serves as cofactor.

It catalyses the reaction L-tyrosine + H(+) = tyramine + CO2. It carries out the reaction L-aspartate + H(+) = beta-alanine + CO2. Its pathway is cofactor biosynthesis; methanofuran biosynthesis. The protein operates within cofactor biosynthesis; coenzyme A biosynthesis. Its function is as follows. Catalyzes the decarboxylation of L-tyrosine to produce tyramine for methanofuran biosynthesis. Can also catalyze the decarboxylation of L-aspartate to produce beta-alanine for coenzyme A (CoA) biosynthesis. This Methanococcus aeolicus (strain ATCC BAA-1280 / DSM 17508 / OCM 812 / Nankai-3) protein is Probable L-tyrosine/L-aspartate decarboxylase.